A 249-amino-acid polypeptide reads, in one-letter code: UDP-N-acetyl-D-mannosaminuronic acid transferase (249 aa).

The protein belongs to the glycosyltransferase 26 family.

The enzyme catalyses UDP-N-acetyl-alpha-D-mannosaminouronate + N-acetyl-alpha-D-glucosaminyl-di-trans,octa-cis-undecaprenyl diphosphate = beta-D-ManNAcA-(1-&gt;4)-alpha-D-GlcNAc-di-trans,octa-cis-undecaprenyl diphosphate + UDP + H(+). Its pathway is bacterial outer membrane biogenesis; enterobacterial common antigen biosynthesis. Its function is as follows. Catalyzes the synthesis of Und-PP-GlcNAc-ManNAcA (Lipid II), the second lipid-linked intermediate involved in enterobacterial common antigen (ECA) synthesis. The protein is UDP-N-acetyl-D-mannosaminuronic acid transferase of Pectobacterium atrosepticum (strain SCRI 1043 / ATCC BAA-672) (Erwinia carotovora subsp. atroseptica).